A 1977-amino-acid polypeptide reads, in one-letter code: Protein rotatin homolog (1977 aa).

The disordered stretch occupies residues 141–166; sequence SVSSLSSNDIPSQATESADSSSNQIY.

This sequence belongs to the rotatin family. As to quaternary structure, interacts with Rcd4;this complex is recruited to daughter centrioles before their conversion to centrosomes.

Its subcellular location is the cytoplasm. The protein localises to the cytoskeleton. It is found in the microtubule organizing center. The protein resides in the centrosome. It localises to the centriole. Participes in the structural integrity of both centrioles and basal bodies and in centriole cohesion. Participates in the later stages of centriole assembly through the interaction with Rcd4 leading to the centriole to centrosome conversion. The polypeptide is Protein rotatin homolog (Drosophila melanogaster (Fruit fly)).